Reading from the N-terminus, the 458-residue chain is Transcription factor ORF10 (458 aa).

Positions 38 to 65 (CESCRLKKLRCSGHKSGCDRCRSQAMKC) form a DNA-binding region, zn(2)-C6 fungal-type. The disordered stretch occupies residues 69 to 109 (IGAPSNSSRPKSRSHFQPNFSNMSGTAGTSKAPSPLGNDGV). The span at 71–100 (APSNSSRPKSRSHFQPNFSNMSGTAGTSKA) shows a compositional bias: polar residues.

It is found in the nucleus. Its function is as follows. Transcription factor that specifically regulates the expression of the gene cluster that mediates the biosynthesis of PR-toxin, a bicyclic sesquiterpene belonging to the eremophilane class and acting as a mycotoxin. This chain is Transcription factor ORF10, found in Penicillium roqueforti (strain FM164).